The sequence spans 178 residues: ATP synthase subunit delta (178 aa).

It belongs to the ATPase delta chain family. In terms of assembly, F-type ATPases have 2 components, F(1) - the catalytic core - and F(0) - the membrane proton channel. F(1) has five subunits: alpha(3), beta(3), gamma(1), delta(1), epsilon(1). F(0) has three main subunits: a(1), b(2) and c(10-14). The alpha and beta chains form an alternating ring which encloses part of the gamma chain. F(1) is attached to F(0) by a central stalk formed by the gamma and epsilon chains, while a peripheral stalk is formed by the delta and b chains.

The protein localises to the cell membrane. F(1)F(0) ATP synthase produces ATP from ADP in the presence of a proton or sodium gradient. F-type ATPases consist of two structural domains, F(1) containing the extramembraneous catalytic core and F(0) containing the membrane proton channel, linked together by a central stalk and a peripheral stalk. During catalysis, ATP synthesis in the catalytic domain of F(1) is coupled via a rotary mechanism of the central stalk subunits to proton translocation. In terms of biological role, this protein is part of the stalk that links CF(0) to CF(1). It either transmits conformational changes from CF(0) to CF(1) or is implicated in proton conduction. The polypeptide is ATP synthase subunit delta (Polynucleobacter asymbioticus (strain DSM 18221 / CIP 109841 / QLW-P1DMWA-1) (Polynucleobacter necessarius subsp. asymbioticus)).